The primary structure comprises 380 residues: Probable protein phosphatase 2C 34 (380 aa).

Positions 32–335 (AAGEFSMAAA…DDISVIVVYL (304 aa)) constitute a PPM-type phosphatase domain. Mn(2+)-binding residues include aspartate 66, glycine 67, aspartate 267, and aspartate 326.

The protein belongs to the PP2C family. The cofactor is Mg(2+). Requires Mn(2+) as cofactor.

It catalyses the reaction O-phospho-L-seryl-[protein] + H2O = L-seryl-[protein] + phosphate. The catalysed reaction is O-phospho-L-threonyl-[protein] + H2O = L-threonyl-[protein] + phosphate. This Oryza sativa subsp. indica (Rice) protein is Probable protein phosphatase 2C 34 (BIPP2C2).